Reading from the N-terminus, the 121-residue chain is MLLKLIVALSLTLTLASATSDPKGWFCSFECNDWNQLEMACQKEKDCFEKTNNQFTNETVACMQPCWDLGIPCRTQCYKVYDQCTSDCPYTVPNPYECFTTCFKEAFAEVKPQIPKANLDE.

The N-terminal stretch at 1 to 18 (MLLKLIVALSLTLTLASA) is a signal peptide. The N-linked (GlcNAc...) asparagine glycan is linked to Asn-57.

The protein resides in the secreted. Its function is as follows. Interacts with the p75 low-affinity neurotrophin receptor. Evokes neurite outgrowth and modulated calcium currents in pedal motor neurons. May be involved in target-derived trophic support for motor neurons. The sequence is that of Cysteine-rich neurotrophic factor from Lymnaea stagnalis (Great pond snail).